The chain runs to 279 residues: Ribonuclease Z (279 aa).

Zn(2+) contacts are provided by His61, His63, Asp65, His66, His153, Asp176, and His240. The active-site Proton acceptor is Asp65.

The protein belongs to the RNase Z family. Homodimer. Zn(2+) is required as a cofactor.

It catalyses the reaction Endonucleolytic cleavage of RNA, removing extra 3' nucleotides from tRNA precursor, generating 3' termini of tRNAs. A 3'-hydroxy group is left at the tRNA terminus and a 5'-phosphoryl group is left at the trailer molecule.. Functionally, zinc phosphodiesterase, which displays some tRNA 3'-processing endonuclease activity. Probably involved in tRNA maturation, by removing a 3'-trailer from precursor tRNA. The chain is Ribonuclease Z from Mycobacterium marinum (strain ATCC BAA-535 / M).